The sequence spans 188 residues: Elongation factor P (188 aa).

The protein belongs to the elongation factor P family.

It is found in the cytoplasm. It participates in protein biosynthesis; polypeptide chain elongation. In terms of biological role, involved in peptide bond synthesis. Stimulates efficient translation and peptide-bond synthesis on native or reconstituted 70S ribosomes in vitro. Probably functions indirectly by altering the affinity of the ribosome for aminoacyl-tRNA, thus increasing their reactivity as acceptors for peptidyl transferase. This is Elongation factor P from Methylorubrum populi (strain ATCC BAA-705 / NCIMB 13946 / BJ001) (Methylobacterium populi).